A 186-amino-acid polypeptide reads, in one-letter code: MSKKYDKLGNDVFNKVEKINSELFTLTYGALVTQLIKDYEDIEQVNIKLEQMGYNIGIRLIEEFLAKSGIGRCSDFIETAEVIAKVGFKMFLGVNAHVGDWDANRKEFHLTIEDNPLIDFVELPDQYKHKLYYSNILCGVMRGALEMVQMKVKCTFVKCTLSDDSTSEIKVVLEEVLSDMIPVGYD.

This sequence belongs to the TRAPP small subunits family. BET3 subfamily. In terms of assembly, homodimer. Part of the multisubunit TRAPP (transport protein particle) complex.

It localises to the golgi apparatus. It is found in the cis-Golgi network. The protein localises to the endoplasmic reticulum. Its function is as follows. May play a role in vesicular transport from endoplasmic reticulum to Golgi. This Dictyostelium discoideum (Social amoeba) protein is Trafficking protein particle complex subunit 3 (trappc3).